The chain runs to 444 residues: Phosphoglucosamine mutase (444 aa).

The active-site Phosphoserine intermediate is the serine 104. Mg(2+) is bound by residues serine 104, aspartate 243, aspartate 245, and aspartate 247. Serine 104 bears the Phosphoserine mark.

This sequence belongs to the phosphohexose mutase family. Mg(2+) is required as a cofactor. In terms of processing, activated by phosphorylation.

It carries out the reaction alpha-D-glucosamine 1-phosphate = D-glucosamine 6-phosphate. In terms of biological role, catalyzes the conversion of glucosamine-6-phosphate to glucosamine-1-phosphate. This is Phosphoglucosamine mutase from Neisseria meningitidis serogroup A / serotype 4A (strain DSM 15465 / Z2491).